We begin with the raw amino-acid sequence, 1420 residues long: DNA-directed RNA polymerase subunit beta' (1420 aa).

The Zn(2+) site is built by Cys71, Cys73, Cys86, and Cys89. Mg(2+) is bound by residues Asp461, Asp463, and Asp465. Zn(2+)-binding residues include Cys815, Cys889, Cys896, and Cys899.

This sequence belongs to the RNA polymerase beta' chain family. As to quaternary structure, the RNAP catalytic core consists of 2 alpha, 1 beta, 1 beta' and 1 omega subunit. When a sigma factor is associated with the core the holoenzyme is formed, which can initiate transcription. It depends on Mg(2+) as a cofactor. Requires Zn(2+) as cofactor.

It carries out the reaction RNA(n) + a ribonucleoside 5'-triphosphate = RNA(n+1) + diphosphate. Its function is as follows. DNA-dependent RNA polymerase catalyzes the transcription of DNA into RNA using the four ribonucleoside triphosphates as substrates. This Histophilus somni (strain 129Pt) (Haemophilus somnus) protein is DNA-directed RNA polymerase subunit beta'.